The sequence spans 122 residues: Large ribosomal subunit protein uL14 (122 aa).

This sequence belongs to the universal ribosomal protein uL14 family. In terms of assembly, part of the 50S ribosomal subunit. Forms a cluster with proteins L3 and L19. In the 70S ribosome, L14 and L19 interact and together make contacts with the 16S rRNA in bridges B5 and B8.

Its function is as follows. Binds to 23S rRNA. Forms part of two intersubunit bridges in the 70S ribosome. In Bacillus mycoides (strain KBAB4) (Bacillus weihenstephanensis), this protein is Large ribosomal subunit protein uL14.